Consider the following 92-residue polypeptide: Small ribosomal subunit protein uS19c (92 aa).

This sequence belongs to the universal ribosomal protein uS19 family.

The protein resides in the plastid. It localises to the chloroplast. Protein S19 forms a complex with S13 that binds strongly to the 16S ribosomal RNA. The sequence is that of Small ribosomal subunit protein uS19c from Liriodendron tulipifera (Tuliptree).